The primary structure comprises 366 residues: RNA 3'-terminal phosphate cyclase (366 aa).

ATP is bound by residues Gln104, Pro131, Tyr294, Asp297, Gln298, and His320. The Tele-AMP-histidine intermediate role is filled by His320.

Belongs to the RNA 3'-terminal cyclase family. Type 1 subfamily.

The protein localises to the nucleus. It localises to the nucleoplasm. The enzyme catalyses a 3'-end 3'-phospho-ribonucleotide-RNA + ATP = a 3'-end 2',3'-cyclophospho-ribonucleotide-RNA + AMP + diphosphate. In terms of biological role, catalyzes the conversion of 3'-phosphate to a 2',3'-cyclic phosphodiester at the end of RNA. The mechanism of action of the enzyme occurs in 3 steps: (A) adenylation of the enzyme by ATP; (B) transfer of adenylate to an RNA-N3'P to produce RNA-N3'PP5'A; (C) and attack of the adjacent 2'-hydroxyl on the 3'-phosphorus in the diester linkage to produce the cyclic end product. Likely functions in some aspects of cellular RNA processing. Function plays an important role in regulating axon regeneration by inhibiting central nervous system (CNS) axon regeneration following optic nerve injury. The polypeptide is RNA 3'-terminal phosphate cyclase (RTCA) (Bos taurus (Bovine)).